We begin with the raw amino-acid sequence, 661 residues long: uncharacterized protein (661 aa).

7 helical membrane passes run 37–57, 87–107, 120–140, 158–178, 243–263, 266–286, and 341–361; these read VFLG…LFLS, INSP…AVFI, WLLL…NVIL, VFWQ…PIIV, LLDI…LYTI, TLMW…IAIG, and FNLL…YNYF. The ABC transmembrane type-1 domain maps to 123 to 410; sequence LGVLLSLLFV…VTNQIQNITE (288 aa). Residues 453–659 enclose the ABC transporter domain; that stretch reads VALENVTLSP…AEGRWQISPI (207 aa). ATP is bound at residue 487–494; sequence GPSGSGKS.

This sequence belongs to the ABC transporter superfamily.

It localises to the cell inner membrane. This is an uncharacterized protein from Synechocystis sp. (strain ATCC 27184 / PCC 6803 / Kazusa).